The primary structure comprises 250 residues: Triosephosphate isomerase (250 aa).

10–12 (NWK) lines the substrate pocket. H96 functions as the Electrophile in the catalytic mechanism. E168 serves as the catalytic Proton acceptor. Residues G174, S214, and 235–236 (GG) contribute to the substrate site.

It belongs to the triosephosphate isomerase family. As to quaternary structure, homodimer.

It is found in the cytoplasm. The catalysed reaction is D-glyceraldehyde 3-phosphate = dihydroxyacetone phosphate. It functions in the pathway carbohydrate biosynthesis; gluconeogenesis. The protein operates within carbohydrate degradation; glycolysis; D-glyceraldehyde 3-phosphate from glycerone phosphate: step 1/1. Functionally, involved in the gluconeogenesis. Catalyzes stereospecifically the conversion of dihydroxyacetone phosphate (DHAP) to D-glyceraldehyde-3-phosphate (G3P). The protein is Triosephosphate isomerase of Streptococcus suis (strain 98HAH33).